The sequence spans 698 residues: Ubiquitin-like modifier-activating enzyme ATG7 (698 aa).

The short motif at 11–13 (FAP) is the FAP motif element. Lys-41 participates in a covalent cross-link: Glycyl lysine isopeptide (Lys-Gly) (interchain with G-Cter in ubiquitin). Residue Cys-567 is the Glycyl thioester intermediate of the active site. The residue at position 693 (Ser-693) is a Phosphoserine.

Belongs to the ATG7 family. In terms of assembly, homodimer. Interacts with ATG3; this interaction is essential for the transfer of ATG8-like proteins's thioester from ATG7 to ATG3 and plays a role in the conjugation of ATG12 to ATG5. Interacts with ATG12. Interacts with ATG10. Forms intermediate conjugates with GABARAPL1. Forms intermediate conjugates with ATG8-like proteins such as GABARAP, GABARAPL2 or MAP1LC3A. Interacts with EP300 acetyltransferase. Interacts with FOXO1. Acetylated by EP300. Post-translationally, polyubiquitinated on Lys-41 via 'Lys-63'-linked ubiquitin by TRIM32; this modification positiely regulates ATG8 and ATG12 activating enzyme activity leading to initiation of autophagy under metabolic stress. In terms of tissue distribution, widely expressed, especially in kidney, liver, lymph nodes and bone marrow.

It localises to the cytoplasm. It is found in the preautophagosomal structure. Functionally, E1-like activating enzyme involved in the 2 ubiquitin-like systems required for cytoplasm to vacuole transport (Cvt) and autophagy. Activates ATG12 for its conjugation with ATG5 as well as the ATG8 family proteins for their conjugation with phosphatidylethanolamine. Both systems are needed for the ATG8 association to Cvt vesicles and autophagosomes membranes. Facilitates LC3-I lipidation with phosphatidylethanolamine to form LC3-II which is found on autophagosomal membranes. Required for autophagic death induced by caspase-8 inhibition. Required for mitophagy which contributes to regulate mitochondrial quantity and quality by eliminating the mitochondria to a basal level to fulfill cellular energy requirements and preventing excess ROS production. Modulates p53/TP53 activity to regulate cell cycle and survival during metabolic stress. Also plays a key role in the maintenance of axonal homeostasis, the prevention of axonal degeneration, the maintenance of hematopoietic stem cells, the formation of Paneth cell granules, as well as in adipose differentiation. Plays a role in regulating the liver clock and glucose metabolism by mediating the autophagic degradation of CRY1 (clock repressor) in a time-dependent manner. The polypeptide is Ubiquitin-like modifier-activating enzyme ATG7 (Mus musculus (Mouse)).